The primary structure comprises 115 residues: Large ribosomal subunit protein bL21 (115 aa).

This sequence belongs to the bacterial ribosomal protein bL21 family. As to quaternary structure, part of the 50S ribosomal subunit. Contacts protein L20.

Its function is as follows. This protein binds to 23S rRNA in the presence of protein L20. This Coxiella burnetii (strain RSA 331 / Henzerling II) protein is Large ribosomal subunit protein bL21.